The following is a 124-amino-acid chain: Small ribosomal subunit protein uS12 (124 aa).

A 3-methylthioaspartic acid modification is found at Asp-89.

The protein belongs to the universal ribosomal protein uS12 family. Part of the 30S ribosomal subunit. Contacts proteins S8 and S17. May interact with IF1 in the 30S initiation complex.

With S4 and S5 plays an important role in translational accuracy. In terms of biological role, interacts with and stabilizes bases of the 16S rRNA that are involved in tRNA selection in the A site and with the mRNA backbone. Located at the interface of the 30S and 50S subunits, it traverses the body of the 30S subunit contacting proteins on the other side and probably holding the rRNA structure together. The combined cluster of proteins S8, S12 and S17 appears to hold together the shoulder and platform of the 30S subunit. The protein is Small ribosomal subunit protein uS12 of Shewanella halifaxensis (strain HAW-EB4).